A 157-amino-acid chain; its full sequence is Ubiquitin-like protein 4A (157 aa).

One can recognise a Ubiquitin-like domain in the interval 1 to 76 (MQLTVKALQG…LNLVVKPLEK (76 aa)). A Glycyl lysine isopeptide (Lys-Gly) (interchain with G-Cter in ubiquitin) cross-link involves residue K48. S90 bears the Phosphoserine mark. The segment at 96–138 (WQLISKVLARHFSAADASRVLEQLQRDYERSLSRLTLDDIERL) is required and sufficient for interaction with BAG6.

In terms of assembly, component of the BAG6/BAT3 complex, at least composed of BAG6, UBL4A and GET4/TRC35. Interacts with BAG6; the interaction is direct and required for UBL4A protein stability. Interacts with USP13; may be indirect via BAG6. In terms of processing, polyubiquitinated. Ubiquitination by AMFR and deubiquitination by USP13 may regulate the interaction between the BAG6/BAT complex and SGTA and therefore may regulate client proteins fate.

The protein resides in the cytoplasm. Its subcellular location is the cytosol. The protein localises to the nucleus. Functionally, as part of a cytosolic protein quality control complex, the BAG6/BAT3 complex, maintains misfolded and hydrophobic patches-containing proteins in a soluble state and participates in their proper delivery to the endoplasmic reticulum or alternatively can promote their sorting to the proteasome where they undergo degradation. The BAG6/BAT3 complex is involved in the post-translational delivery of tail-anchored/type II transmembrane proteins to the endoplasmic reticulum membrane. Recruited to ribosomes, it interacts with the transmembrane region of newly synthesized tail-anchored proteins and together with SGTA and ASNA1 mediates their delivery to the endoplasmic reticulum. Client proteins that cannot be properly delivered to the endoplasmic reticulum are ubiquitinated and sorted to the proteasome. Similarly, the BAG6/BAT3 complex also functions as a sorting platform for proteins of the secretory pathway that are mislocalized to the cytosol either delivering them to the proteasome for degradation or to the endoplasmic reticulum. The BAG6/BAT3 complex also plays a role in the endoplasmic reticulum-associated degradation (ERAD), a quality control mechanism that eliminates unwanted proteins of the endoplasmic reticulum through their retrotranslocation to the cytosol and their targeting to the proteasome. It maintains these retrotranslocated proteins in an unfolded yet soluble state condition in the cytosol to ensure their proper delivery to the proteasome. This Callithrix jacchus (White-tufted-ear marmoset) protein is Ubiquitin-like protein 4A (UBL4A).